We begin with the raw amino-acid sequence, 289 residues long: Iodotyrosine deiodinase 1 (289 aa).

The chain crosses the membrane as a helical span at residues 1-21 (MYFLTPILVAILCILVVWIFK). Residues 47 to 58 (DLKDSSDLHQAE) show a composition bias toward basic and acidic residues. A disordered region spans residues 47–69 (DLKDSSDLHQAEEDADEWQESEE). Residues 59-69 (EDADEWQESEE) show a composition bias toward acidic residues. FMN is bound by residues 100-104 (RRSVR), Ser-128, and 128-129 (SG). 3,5-diiodo-L-tyrosine contacts are provided by Ala-130, Glu-157, Tyr-161, and Lys-182. Residues Ala-130, Glu-157, Tyr-161, and Lys-182 each coordinate 3-iodo-L-tyrosine. FMN-binding positions include 237-239 (TTT) and Arg-279.

It belongs to the nitroreductase family. In terms of assembly, homodimer. FMN serves as cofactor.

It is found in the cell membrane. It localises to the cytoplasmic vesicle membrane. The catalysed reaction is 2 iodide + L-tyrosine + 2 NADP(+) = 3,5-diiodo-L-tyrosine + 2 NADPH + H(+). It carries out the reaction iodide + L-tyrosine + NADP(+) = 3-iodo-L-tyrosine + NADPH. It catalyses the reaction 3-iodo-L-tyrosine + iodide + NADP(+) = 3,5-diiodo-L-tyrosine + NADPH + H(+). The enzyme catalyses L-tyrosine + chloride + NADP(+) = 3-chloro-L-tyrosine + NADPH. The catalysed reaction is bromide + L-tyrosine + NADP(+) = 3-bromo-L-tyrosine + NADPH. In terms of biological role, catalyzes the dehalogenation of halotyrosines such as 3-bromo-L-tyrosine, 3-chloro-L-tyrosine, 3-iodo-L-tyrosine and 3,5-diiodo-L-tyrosine. During thyroid hormone biosynthesis, facilitates iodide salvage by catalysing the oxidative NADPH-dependent deiodination of the halogenated by-products of thyroid hormone production, monoiodotyrosine (L-MIT) and diiodotyrosine (L-DIT). The scavanged iodide can then reenter the hormone-producing pathways. Acts more efficiently on 3-iodo-L-tyrosine than 3,5-diiodo-L-tyrosine. The chain is Iodotyrosine deiodinase 1 (IYD) from Pongo abelii (Sumatran orangutan).